Reading from the N-terminus, the 143-residue chain is Sirohydrochlorin cobaltochelatase (143 aa).

The active-site Proton acceptor is histidine 9. Position 9 (histidine 9) interacts with Co(2+). A Ni(2+)-binding site is contributed by histidine 9. Residues glutamate 45 and 70–75 (LAHGIH) each bind substrate. Residue histidine 75 participates in Co(2+) binding. A Ni(2+)-binding site is contributed by histidine 75.

The protein belongs to the CbiX family. CbiXS subfamily. In terms of assembly, homotetramer; dimer of dimers.

The enzyme catalyses Co-sirohydrochlorin + 2 H(+) = sirohydrochlorin + Co(2+). It catalyses the reaction Ni-sirohydrochlorin + 2 H(+) = sirohydrochlorin + Ni(2+). It participates in cofactor biosynthesis; adenosylcobalamin biosynthesis; cob(II)yrinate a,c-diamide from sirohydrochlorin (anaerobic route): step 1/10. Its function is as follows. Catalyzes the insertion of Co(2+) into sirohydrochlorin as part of the anaerobic pathway to cobalamin biosynthesis. Involved in the biosynthesis of the unique nickel-containing tetrapyrrole coenzyme F430, the prosthetic group of methyl-coenzyme M reductase (MCR), which plays a key role in methanogenesis and anaerobic methane oxidation. Catalyzes the insertion of Ni(2+) into sirohydrochlorin to yield Ni-sirohydrochlorin. The polypeptide is Sirohydrochlorin cobaltochelatase (Methanocaldococcus jannaschii (strain ATCC 43067 / DSM 2661 / JAL-1 / JCM 10045 / NBRC 100440) (Methanococcus jannaschii)).